The sequence spans 366 residues: 1-deoxy-D-xylulose 5-phosphate reductoisomerase (366 aa).

Residues Thr7, Gly8, Ser9, Ile10, Gly31, Asn33, and Asn111 each coordinate NADPH. Lys112 contacts 1-deoxy-D-xylulose 5-phosphate. NADPH is bound at residue Glu113. Residue Asp131 coordinates Mn(2+). The 1-deoxy-D-xylulose 5-phosphate site is built by Ser132, Glu133, Ser162, and His185. Glu133 contributes to the Mn(2+) binding site. An NADPH-binding site is contributed by Gly191. Residues Ser198, Asn203, Lys204, and Glu207 each coordinate 1-deoxy-D-xylulose 5-phosphate. Glu207 serves as a coordination point for Mn(2+).

The protein belongs to the DXR family. It depends on Mg(2+) as a cofactor. The cofactor is Mn(2+).

The catalysed reaction is 2-C-methyl-D-erythritol 4-phosphate + NADP(+) = 1-deoxy-D-xylulose 5-phosphate + NADPH + H(+). It participates in isoprenoid biosynthesis; isopentenyl diphosphate biosynthesis via DXP pathway; isopentenyl diphosphate from 1-deoxy-D-xylulose 5-phosphate: step 1/6. In terms of biological role, catalyzes the NADPH-dependent rearrangement and reduction of 1-deoxy-D-xylulose-5-phosphate (DXP) to 2-C-methyl-D-erythritol 4-phosphate (MEP). This Nautilia profundicola (strain ATCC BAA-1463 / DSM 18972 / AmH) protein is 1-deoxy-D-xylulose 5-phosphate reductoisomerase.